Consider the following 316-residue polypeptide: MELRPLVMCFALCVVYASSKPTIEKKDRVHHDDPLSSRDHEDAENFDYDHEAFLGQDEAKTFDQLTPEESKERLGMLVERIDEDKDGYVSVEEMKKWIKHSQKRWIYDDVDRQWKGHDHNGDGLVSWEEYKNATYGYILDDPDPEDGFSYRQMISRDERRFKMSDLDADLKANKEEFTAFLHPEEYDHMKDIVVLETMEDIDKNGDGFIDLEEYIGDMYNQEGDPSEPEWVRTEREQFTEFRDTNKDGRMDKEETKDWILPSDYDHAEAEAKHLVYESDNDKDGKLTKAEIVEKYDLFVGSQATDFGEALARHDEF.

An N-terminal signal peptide occupies residues 1 to 19; that stretch reads MELRPLVMCFALCVVYASS. EF-hand domains lie at 69–104, 105–140, 152–187, 189–224, 230–265, and 266–301; these read ESKE…SQKR, WIYD…YILD, QMIS…EEYD, MKDI…QEGD, WVRT…SDYD, and HAEA…FVGS. Residues Asp82, Asp84, Asp86, Tyr88, Glu93, Asp118, Asn120, Asp122, and Glu129 each coordinate Ca(2+). Asn132 carries N-linked (GlcNAc...) asparagine glycosylation. Ca(2+) is bound by residues Asp165, Asp167, Asp169, Lys171, Glu176, Asp202, Asn204, Asp206, Glu213, Asp243, Asn245, Asp247, Arg249, Glu254, Asp279, Asp281, Asp283, Lys285, and Glu290. The Prevents secretion from ER signature appears at 313–316; it reads HDEF.

The protein belongs to the CREC family. As to quaternary structure, interacts with ggcx.

The protein resides in the endoplasmic reticulum membrane. The protein localises to the golgi apparatus. It is found in the secreted. It localises to the melanosome. Its subcellular location is the sarcoplasmic reticulum lumen. Its function is as follows. Involved in regulation of vitamin K-dependent carboxylation of multiple N-terminal glutamate residues. Seems to inhibit gamma-carboxylase ggcx. Binds 7 calcium ions with a low affinity. The protein is Calumenin-B (calub) of Salmo salar (Atlantic salmon).